Consider the following 229-residue polypeptide: Putative N-acetylmannosamine-6-phosphate 2-epimerase (229 aa).

Belongs to the NanE family.

It carries out the reaction an N-acyl-D-glucosamine 6-phosphate = an N-acyl-D-mannosamine 6-phosphate. It participates in amino-sugar metabolism; N-acetylneuraminate degradation; D-fructose 6-phosphate from N-acetylneuraminate: step 3/5. In terms of biological role, converts N-acetylmannosamine-6-phosphate (ManNAc-6-P) to N-acetylglucosamine-6-phosphate (GlcNAc-6-P). This Haemophilus ducreyi (strain 35000HP / ATCC 700724) protein is Putative N-acetylmannosamine-6-phosphate 2-epimerase.